The chain runs to 552 residues: Probable ABC transporter ATP-binding/permease protein HI_0664 (552 aa).

The next 6 membrane-spanning stretches (helical) occupy residues 22–42 (IMAFTITMGTLGFLAAIFIMV), 52–72 (LNFDTHLSFSGILTALIVLAV), 139–159 (IAPIMIAFFTSAILLLVFAQL), 162–182 (WFVLVALAAYLTVGVILPIIT), 253–273 (EVAVSVFNIIMLFTGLILFSL), and 278–298 (FAAFLIGVILLMSSYGPVIAL). The ABC transmembrane type-1 domain maps to 23–307 (MAFTITMGTL…LSNLSSNLLQ (285 aa)). Residues 340–552 (IDVENVNFAY…VIGIENGRMS (213 aa)) form the ABC transporter domain. An ATP-binding site is contributed by 372 to 379 (GRSGSGKS).

It belongs to the ABC transporter superfamily. Lipid exporter (TC 3.A.1.106) family.

It is found in the cell inner membrane. This Haemophilus influenzae (strain ATCC 51907 / DSM 11121 / KW20 / Rd) protein is Probable ABC transporter ATP-binding/permease protein HI_0664.